We begin with the raw amino-acid sequence, 1117 residues long: Zinc finger E-box-binding homeobox 1 (1117 aa).

Disordered regions lie at residues 1 to 103 (MADG…QNHD) and 122 to 143 (APEE…NGTP). Over residues 15–30 (PRRNNVTNYNTVVEAN) the composition is skewed to low complexity. Phosphoserine occurs at positions 31 and 33. The C2H2-type 1 zinc-finger motif lies at 150–173 (LTCPYCDRGYKRFTSLKEHIKYRH). Residues Lys-166 and Lys-175 each participate in a glycyl lysine isopeptide (Lys-Gly) (interchain with G-Cter in SUMO2) cross-link. 2 consecutive C2H2-type zinc fingers follow at residues 180-202 (FSCS…MTSH) and 220-242 (FKCT…LRIH). A C2H2-type 4; atypical zinc finger spans residues 248–272 (YECPNCKKRFSHSGSYSSHISSKKC). Residues 278–307 (VNGRPRSGLKTSQCSSPSLSTSPGSPTRPQ) form a disordered region. A Glycyl lysine isopeptide (Lys-Gly) (interchain with G-Cter in SUMO2) cross-link involves residue Lys-287. A compositionally biased stretch (low complexity) spans 288 to 304 (TSQCSSPSLSTSPGSPT). A phosphoserine mark is found at Ser-293 and Ser-302. Residues Lys-311 and Lys-315 each participate in a glycyl lysine isopeptide (Lys-Gly) (interchain with G-Cter in SUMO2) cross-link. Residue Lys-327 forms a Glycyl lysine isopeptide (Lys-Gly) (interchain with G-Cter in SUMO); alternate linkage. A Glycyl lysine isopeptide (Lys-Gly) (interchain with G-Cter in SUMO2); alternate cross-link involves residue Lys-327. Glycyl lysine isopeptide (Lys-Gly) (interchain with G-Cter in SUMO2) cross-links involve residues Lys-419, Lys-473, Lys-484, Lys-495, and Lys-528. Disordered stretches follow at residues 476 to 501 (IPAP…TDKS), 528 to 566 (KHYD…SQPP), and 613 to 687 (GQIP…SPLN). Basic and acidic residues predominate over residues 484-501 (KSEKLPEDLTVKSETDKS). A DNA-binding region (homeobox; atypical) is located at residues 559 to 618 (DLSPSQPPLKNLLSLLKAYYALNAQPSTEELSKIADSVNLPLDGVKKWFEKMQAGQIPGQ). Ser-657, Ser-664, Ser-671, and Ser-678 each carry phosphoserine. The segment covering 673–687 (MNGSRSCTSSPSPLN) has biased composition (polar residues). Phosphothreonine is present on Thr-680. The residue at position 682 (Ser-682) is a Phosphoserine. Lys-752 is covalently cross-linked (Glycyl lysine isopeptide (Lys-Gly) (interchain with G-Cter in SUMO); alternate). Residue Lys-752 forms a Glycyl lysine isopeptide (Lys-Gly) (interchain with G-Cter in SUMO2); alternate linkage. Residues 834 to 876 (PPVKVIQPNGNQDERQDTSSEGVSTVEDQNDSDSTPPKKKTRK) are disordered. The segment covering 852 to 868 (SSEGVSTVEDQNDSDST) has biased composition (polar residues). 2 consecutive C2H2-type zinc fingers follow at residues 882-904 (YACD…KYEH) and 910-932 (HECG…MRLH). The segment at 938 to 959 (YQCDKCGKRFSHSGSYSQHMNH) adopts a C2H2-type 7; atypical zinc-finger fold. Residues 991–1117 (EHVGARASPS…QLSEEKTNEA (127 aa)) are disordered. 3 stretches are compositionally biased toward acidic residues: residues 1013–1032 (EEDE…MEEL), 1042–1069 (QGEE…DEAE), and 1098–1109 (SEMESESESEQL).

Belongs to the delta-EF1/ZFH-1 C2H2-type zinc-finger family. As to quaternary structure, interacts (via N-terminus) with SMARCA4/BRG1. Post-translationally, ubiquitinated, leading to degradation in a proteasome-dependent manner. Deubiquitinated by USP51, leading to stabilization. Expressed in the external germinal layer (EGL) and internal granular layer (IGL) of the cerebellum (at protein level).

It localises to the nucleus. Its function is as follows. Acts as a transcriptional repressor. Binds to E-box sequences in the immunoglobulin heavy chain enhancer as well as in the regulatory regions of many other tissue-specific genes. Represses E-cadherin promoter and induces an epithelial-mesenchymal transition (EMT) by recruiting SMARCA4/BRG1. Represses BCL6 transcription in the presence of the corepressor CTBP1. Positively regulates neuronal differentiation. Represses RCOR1 transcription activation during neurogenesis. Represses transcription by binding to the E box (5'-CANNTG-3'). In the absence of TGFB1, acts as a repressor of COL1A2 transcription via binding to the E-box in the upstream enhancer region. Promotes tumorigenicity by repressing stemness-inhibiting microRNAs. The chain is Zinc finger E-box-binding homeobox 1 from Mus musculus (Mouse).